We begin with the raw amino-acid sequence, 957 residues long: Collagen alpha-1(I) chain (957 aa).

A disordered region spans residues 1–957 (GPMGPSGPRG…PGPPGPPGPP (957 aa)). A compositionally biased stretch (low complexity) spans 23 to 33 (FPGEPGASGPM). Positions 45–59 (NGDDGEAGKPGRPGE) are enriched in basic and acidic residues. Serine 87 is subject to Phosphoserine. Composition is skewed to low complexity over residues 95–113 (DAGP…PRGI) and 125–138 (PAGA…TGAA). Positions 140–152 (PPGPTGPAGPPGF) are enriched in pro residues. Composition is skewed to low complexity over residues 186–210 (AGAA…RGPS) and 219–228 (SGPKGNSGEP). A compositionally biased stretch (gly residues) spans 277–286 (GERGGPGSRG). 8 stretches are compositionally biased toward low complexity: residues 330 to 356 (KGIT…QDGR), 365 to 384 (ARGQ…AGEP), 426 to 453 (QGPA…PGEQ), 488 to 516 (PRGA…QGAP), 576 to 590 (AGPS…ARGA), 603 to 618 (AGFA…PGAK), 649 to 665 (SAGP…AGRV), and 707 to 731 (AGEK…QGIA). Residue serine 579 is modified to Phosphoserine. Composition is skewed to pro residues over residues 772–782 (PPGPMGPPGIA) and 818–833 (AGPP…PGPV). Low complexity predominate over residues 854–868 (IGPVGARGAAGPQGP). A compositionally biased stretch (basic and acidic residues) spans 869 to 883 (RGDKGETGEQGDRGI). Low complexity predominate over residues 902 to 935 (PGEQGPSGASGPAGPRGPPGSAGSPGKDGINGIP). Pro residues predominate over residues 937–957 (PIGPPGPRPGPPGPPGPPGPP).

This sequence belongs to the fibrillar collagen family. As to quaternary structure, trimers of one alpha 2(I) and two alpha 1(I) chains. In terms of processing, prolines at the third position of the tripeptide repeating unit (G-X-Y) are hydroxylated in some or all of the chains. In terms of tissue distribution, forms the fibrils of tendon, ligaments and bones. In bones, the fibrils are mineralized with calcium hydroxyapatite.

The protein localises to the secreted. It is found in the extracellular space. Its subcellular location is the extracellular matrix. In terms of biological role, type I collagen is a member of group I collagen (fibrillar forming collagen). The polypeptide is Collagen alpha-1(I) chain (Hippopotamus amphibius (Hippopotamus)).